Consider the following 213-residue polypeptide: Redox-sensing transcriptional repressor Rex (213 aa).

A DNA-binding region (H-T-H motif) is located at residues 18–57 (LYYRIFKRFHAEKIERANSKQIAEAIGIDSATVRRDFSYF). Residue 92 to 97 (GIGNMG) participates in NAD(+) binding.

Belongs to the transcriptional regulatory Rex family. In terms of assembly, homodimer.

The protein localises to the cytoplasm. Its function is as follows. Modulates transcription in response to changes in cellular NADH/NAD(+) redox state. Binds to the promoter of the aldehyde-alcohol dehydrogenase adhE gene. Functions as a redox-dependent repressor of adhE expression. This chain is Redox-sensing transcriptional repressor Rex, found in Streptococcus pneumoniae serotype 19F (strain G54).